Here is a 564-residue protein sequence, read N- to C-terminus: Phenylalanine--tRNA ligase beta subunit (564 aa).

The region spanning tyrosine 286 to serine 362 is the B5 domain. 4 residues coordinate Mg(2+): aspartate 340, aspartate 346, glutamate 349, and glutamate 350.

It belongs to the phenylalanyl-tRNA synthetase beta subunit family. Type 2 subfamily. Tetramer of two alpha and two beta subunits. Requires Mg(2+) as cofactor.

Its subcellular location is the cytoplasm. It carries out the reaction tRNA(Phe) + L-phenylalanine + ATP = L-phenylalanyl-tRNA(Phe) + AMP + diphosphate + H(+). The chain is Phenylalanine--tRNA ligase beta subunit from Borrelia duttonii (strain Ly).